The chain runs to 156 residues: Transcription antitermination protein NusB (156 aa).

This sequence belongs to the NusB family.

In terms of biological role, involved in transcription antitermination. Required for transcription of ribosomal RNA (rRNA) genes. Binds specifically to the boxA antiterminator sequence of the ribosomal RNA (rrn) operons. The protein is Transcription antitermination protein NusB of Rickettsia bellii (strain OSU 85-389).